The chain runs to 67 residues: Alpha-conotoxin-like Qc1.1b (67 aa).

The N-terminal stretch at M1–S21 is a signal peptide. Positions F22–R46 are excised as a propeptide. 2 disulfide bridges follow: C49–C55 and C50–C63. The interval D51–P53 is lacks the Ser-Xaa-Pro motif that is crucial for potent interaction with nAChR.

The protein belongs to the conotoxin A superfamily. Expressed by the venom duct.

Its subcellular location is the secreted. In terms of biological role, alpha-conotoxins act on postsynaptic membranes, they bind to the nicotinic acetylcholine receptors (nAChR) and thus inhibit them. Has possibly a distinct nAChR binding mode from other alpha-conotoxins, due to a different three residue motif (lacks the Ser-Xaa-Pro motif). The chain is Alpha-conotoxin-like Qc1.1b from Conus quercinus (Oak cone).